A 326-amino-acid chain; its full sequence is Target of rapamycin complex subunit LST8 (326 aa).

Position 1 is an N-acetylmethionine (Met1). 5 WD repeats span residues Met1–Thr37, His40–Ser80, Gly83–Gln122, Gln126–Leu165, and Glu168–Val207. Position 51 is a phosphothreonine (Thr51). Lys86 participates in a covalent cross-link: Glycyl lysine isopeptide (Lys-Gly) (interchain with G-Cter in SUMO3). Residues Lys215, Lys245, and Lys261 each participate in a glycyl lysine isopeptide (Lys-Gly) (interchain with G-Cter in SUMO3) cross-link. Residues Ala218–Glu257 form a WD 6 repeat. The WD 7 repeat unit spans residues Ser268–Gly309. A Glycyl lysine isopeptide (Lys-Gly) (interchain with G-Cter in SUMO3); alternate cross-link involves residue Lys305. Residues Lys305 and Lys313 each participate in a glycyl lysine isopeptide (Lys-Gly) (interchain with G-Cter in ubiquitin); alternate cross-link. Lys313 is covalently cross-linked (Glycyl lysine isopeptide (Lys-Gly) (interchain with G-Cter in SUMO1); alternate).

This sequence belongs to the WD repeat LST8 family. As to quaternary structure, part of the mechanistic target of rapamycin complex 1 (mTORC1) which contains MTOR, MLST8 and RPTOR. mTORC1 associates with AKT1S1/PRAS40, which inhibits its activity. mTORC1 binds to and is inhibited by FKBP12-rapamycin. Within mTORC1, interacts directly with MTOR and RPTOR. Component of the mechanistic target of rapamycin complex 2 (mTORC2), consisting in two heterotretramers composed of MTOR, MLST8, RICTOR and MAPKAP1/SIN1. Contrary to mTORC1, mTORC2 does not bind to and is not sensitive to FKBP12-rapamycin. mTORC1 and mTORC2 associate with DEPTOR, which regulates their activity. Interacts with RHEB. Interacts with MEAK7. Interacts with SIK3. Interacts with SLC38A7; this interaction promotes the recruitment of mTORC1 to the lysosome and its subsequent activation. Phosphorylation at Thr-51 by CDK1 promotes ubiquitination by the SCF(FBXW7) complex, followed by degradation. Post-translationally, ubiquitination by the SCF(FBXW7) and SCF(FBXW11) complexes following phosphorylation at Thr-51 by CDK1, leads to its degradation by the proteasome. Ubiquitination at Lys-305 and Lys-313 by TRAF2 via 'Lys-63'-linked polyubiquitin chains inhibits formation of the mTORC2 complex, while promoting formation of the mTORC1 complex: ubiquitination disrupts the interaction between MLST8 and MAPKAP1/SIN1 to favor mTORC1 assembly. Deubiquitination at Lys-305 and Lys-313 by OTUD7B promotes MLST8 interaction with MAPKAP1/SIN1, facilitating mTORC2 assembly. In terms of processing, sumoylation with SUMO1, SUMO2 and SUMO3 promotes assembly of both mTORC1 and mTORC2 complexes. Expressed at highest levels in the brain and testis, followed by lung, heart, kidney, skeletal muscle, spleen and liver. Also expressed in epididymal, abdominal and brown fat, small intestine and pancreas.

It is found in the lysosome membrane. The protein resides in the cytoplasm. Functionally, subunit of both mTORC1 and mTORC2, which regulates cell growth and survival in response to nutrient and hormonal signals. mTORC1 is activated in response to growth factors or amino acids. In response to nutrients, mTORC1 is recruited to the lysosome membrane and promotes protein, lipid and nucleotide synthesis by phosphorylating several substrates, such as ribosomal protein S6 kinase (RPS6KB1 and RPS6KB2) and EIF4EBP1 (4E-BP1). In the same time, it inhibits catabolic pathways by phosphorylating the autophagy initiation components ULK1 and ATG13, as well as transcription factor TFEB, a master regulators of lysosomal biogenesis and autophagy. The mTORC1 complex is inhibited in response to starvation and amino acid depletion. Within mTORC1, MLST8 interacts directly with MTOR and enhances its kinase activity. In nutrient-poor conditions, stabilizes the MTOR-RPTOR interaction and favors RPTOR-mediated inhibition of MTOR activity. As part of the mTORC2 complex, transduces signals from growth factors to pathways involved in proliferation, cytoskeletal organization, lipogenesis and anabolic output. mTORC2 is also activated by growth factors, but seems to be nutrient-insensitive. In response to growth factors, mTORC2 phosphorylates and activates AGC protein kinase family members, including AKT (AKT1, AKT2 and AKT3), PKC (PRKCA, PRKCB and PRKCE) and SGK1. mTORC2 functions upstream of Rho GTPases to regulate the actin cytoskeleton, probably by activating one or more Rho-type guanine nucleotide exchange factors. mTORC2 promotes the serum-induced formation of stress-fibers or F-actin. mTORC2 plays a critical role in AKT1 activation by mediating phosphorylation of different sites depending on the context, such as 'Thr-450', 'Ser-473', 'Ser-477' or 'Thr-479', facilitating the phosphorylation of the activation loop of AKT1 on 'Thr-308' by PDPK1/PDK1 which is a prerequisite for full activation. mTORC2 regulates the phosphorylation of SGK1 at 'Ser-422'. mTORC2 also modulates the phosphorylation of PRKCA on 'Ser-657'. Within mTORC2, MLST8 acts as a bridge between MAPKAP1/SIN1 and MTOR. The chain is Target of rapamycin complex subunit LST8 from Rattus norvegicus (Rat).